Consider the following 433-residue polypeptide: Chaperone SurA (433 aa).

A signal peptide spans 1-20 (MKNWRTLIFGLMFSVSTAFA). 2 consecutive PpiC domains span residues 171-272 (DTEL…KVND) and 282-382 (VTEV…QLLD).

The protein resides in the periplasm. It catalyses the reaction [protein]-peptidylproline (omega=180) = [protein]-peptidylproline (omega=0). Its function is as follows. Chaperone involved in the correct folding and assembly of outer membrane proteins. Recognizes specific patterns of aromatic residues and the orientation of their side chains, which are found more frequently in integral outer membrane proteins. May act in both early periplasmic and late outer membrane-associated steps of protein maturation. In Photorhabdus laumondii subsp. laumondii (strain DSM 15139 / CIP 105565 / TT01) (Photorhabdus luminescens subsp. laumondii), this protein is Chaperone SurA.